A 139-amino-acid polypeptide reads, in one-letter code: Large ribosomal subunit protein uL13 (139 aa).

This sequence belongs to the universal ribosomal protein uL13 family. In terms of assembly, part of the 50S ribosomal subunit.

Functionally, this protein is one of the early assembly proteins of the 50S ribosomal subunit, although it is not seen to bind rRNA by itself. It is important during the early stages of 50S assembly. This Wolinella succinogenes (strain ATCC 29543 / DSM 1740 / CCUG 13145 / JCM 31913 / LMG 7466 / NCTC 11488 / FDC 602W) (Vibrio succinogenes) protein is Large ribosomal subunit protein uL13.